A 472-amino-acid chain; its full sequence is Tyrosine--tRNA ligase, mitochondrial (472 aa).

L-tyrosine is bound at residue Y72. D76 lines the ATP pocket. The 'HIGH' region motif lies at 77 to 86 (PTGDSLHVGH). Residues D116, Y216, Q220, D223, and Q242 each coordinate L-tyrosine. ATP is bound by residues I269 and K279. The 'KMSKS' region motif lies at 276–280 (KLGKS). N6-acetyllysine is present on residues K350 and K362.

Belongs to the class-I aminoacyl-tRNA synthetase family. In terms of assembly, homodimer.

The protein resides in the mitochondrion matrix. It carries out the reaction tRNA(Tyr) + L-tyrosine + ATP = L-tyrosyl-tRNA(Tyr) + AMP + diphosphate + H(+). In terms of biological role, catalyzes the attachment of tyrosine to tRNA(Tyr) in a two-step reaction: tyrosine is first activated by ATP to form Tyr-AMP and then transferred to the acceptor end of tRNA(Tyr). The chain is Tyrosine--tRNA ligase, mitochondrial (Yars2) from Mus musculus (Mouse).